The chain runs to 349 residues: Isopentenyl-diphosphate delta-isomerase (349 aa).

9 to 10 contributes to the substrate binding site; sequence RK. FMN is bound by residues 65–67, Ser-95, and Asn-124; that span reads AMT. 95-97 contacts substrate; it reads STH. Gln-154 contacts substrate. Position 155 (Glu-155) interacts with Mg(2+). Residues Lys-186, Ser-211, Thr-216, 262–264, and 283–284 each bind FMN; these read GLR and SR.

The protein belongs to the IPP isomerase type 2 family. In terms of assembly, homooctamer. Dimer of tetramers. FMN is required as a cofactor. Requires NADPH as cofactor. It depends on Mg(2+) as a cofactor.

The protein resides in the cytoplasm. It catalyses the reaction isopentenyl diphosphate = dimethylallyl diphosphate. Functionally, involved in the biosynthesis of isoprenoids. Catalyzes the 1,3-allylic rearrangement of the homoallylic substrate isopentenyl (IPP) to its allylic isomer, dimethylallyl diphosphate (DMAPP). The protein is Isopentenyl-diphosphate delta-isomerase of Staphylococcus aureus (strain N315).